Reading from the N-terminus, the 67-residue chain is Large ribosomal subunit protein bL35 (67 aa).

The protein belongs to the bacterial ribosomal protein bL35 family.

The protein is Large ribosomal subunit protein bL35 of Methylorubrum populi (strain ATCC BAA-705 / NCIMB 13946 / BJ001) (Methylobacterium populi).